We begin with the raw amino-acid sequence, 251 residues long: ATP synthase subunit a (251 aa).

Helical transmembrane passes span 28-48 (FTQS…IIAL), 63-80 (LVEI…EQIG), 86-106 (FFPF…LGLF), 115-135 (HVAV…AVAL), 154-176 (ALAP…SLSI), 195-215 (FMFL…LLPM), and 219-239 (VTLV…FAIL).

It belongs to the ATPase A chain family. In terms of assembly, F-type ATPases have 2 components, CF(1) - the catalytic core - and CF(0) - the membrane proton channel. CF(1) has five subunits: alpha(3), beta(3), gamma(1), delta(1), epsilon(1). CF(0) has three main subunits: a(1), b(2) and c(9-12). The alpha and beta chains form an alternating ring which encloses part of the gamma chain. CF(1) is attached to CF(0) by a central stalk formed by the gamma and epsilon chains, while a peripheral stalk is formed by the delta and b chains.

It localises to the cell inner membrane. In terms of biological role, key component of the proton channel; it plays a direct role in the translocation of protons across the membrane. This is ATP synthase subunit a from Granulibacter bethesdensis (strain ATCC BAA-1260 / CGDNIH1).